The chain runs to 230 residues: Complex I assembly factor TMEM126B, mitochondrial (230 aa).

Helical transmembrane passes span 70-92 (LNIHGTLVFGTSSSLSGIMANLV), 107-126 (YASLTTLPVLATIVSYKLFV), 139-161 (SCVLRSALIGMACGVSYPSALAF), and 196-218 (AMAIPLFFQIVMGAFTGLHHYNI).

Belongs to the TMEM126 family. Part of the mitochondrial complex I assembly/MCIA complex that comprises at least the core subunits TMEM126B, NDUFAF1, ECSIT and ACAD9 and complement subunits such as COA1 and TMEM186. Associates with the intermediate 370 kDa subcomplex of incompletely assembled complex I. Interacts with TMEM70.

The protein resides in the mitochondrion membrane. As part of the MCIA complex, involved in the assembly of the mitochondrial complex I. Participates in constructing the membrane arm of complex I. This Mus musculus (Mouse) protein is Complex I assembly factor TMEM126B, mitochondrial.